Here is a 736-residue protein sequence, read N- to C-terminus: Myotubularin-related protein 12 (736 aa).

Residues 182 to 558 (YLRSTNPEML…RQLSLPSSAF (377 aa)) enclose the Myotubularin phosphatase domain. A disordered region spans residues 672 to 691 (SLATQPDHPPPLHHRLPSFG).

The protein belongs to the protein-tyrosine phosphatase family. Non-receptor class myotubularin subfamily. Heterodimer with lipid phosphatase mtm1. In skeletal muscles, the interaction stabilizes both mtmr12 and mtm1 protein levels.

It localises to the cytoplasm. It is found in the sarcoplasmic reticulum. The protein localises to the myofibril. The protein resides in the sarcomere. Functionally, acts as an adapter for the myotubularin phosphatase mtm1 to regulate mtm1 protein stability and possibly its intracellular location. By stabilizing mtm1 protein levels, required for skeletal muscle maintenance but not for myogenesis. In skeletal muscle cells, does not regulate mtm1 subcellular localization. This is Myotubularin-related protein 12 (mtmr12) from Danio rerio (Zebrafish).